A 277-amino-acid chain; its full sequence is Eukaryotic translation initiation factor 3 subunit J (277 aa).

Positions 1 to 80 are disordered; sequence MSWDDEDFAV…PAATKNTMLD (80 aa). Positions 23–43 are enriched in acidic residues; the sequence is WDDEFAENDDEPVLESWEDEE. A compositionally biased stretch (low complexity) spans 50-75; that stretch reads KAAAAAAAKAPKKASPSPAATPAATK. A coiled-coil region spans residues 199–230; it reads TVENIRQTIATLNVLMKDKEREERQARLAKVK. The interval 257 to 277 is disordered; the sequence is DNDFDLGGNDNFDDFGEDDFM. A compositionally biased stretch (acidic residues) spans 267–277; that stretch reads NFDDFGEDDFM.

It belongs to the eIF-3 subunit J family. In terms of assembly, component of the eukaryotic translation initiation factor 3 (eIF-3) complex.

It is found in the cytoplasm. Its function is as follows. Component of the eukaryotic translation initiation factor 3 (eIF-3) complex, which is involved in protein synthesis of a specialized repertoire of mRNAs and, together with other initiation factors, stimulates binding of mRNA and methionyl-tRNAi to the 40S ribosome. The eIF-3 complex specifically targets and initiates translation of a subset of mRNAs involved in cell proliferation. The sequence is that of Eukaryotic translation initiation factor 3 subunit J from Kluyveromyces lactis (strain ATCC 8585 / CBS 2359 / DSM 70799 / NBRC 1267 / NRRL Y-1140 / WM37) (Yeast).